A 509-amino-acid polypeptide reads, in one-letter code: MKGNEFRNQTQTTIKNELAEWSDNSNNSQVDYASNAPSGDHVLVDWDGPNDPKNPKNWPHSAFLIHTILVSMLCLAGNLATTMYAPGAAQLAVEFKTRDTTTIALTVSIYLLGFALAPMVTSPLSEVYGRLIVYHTSNIFFLGFNLACAFSSNIGMFIAFRFLAGCAGSAPMTVGGGTIADFAASPEKNNTALRLFALGPLLGPVIGPIVGGFVAENIGWRWTFRIMSIVIAVLSILSCIFLRETSAAAILGRRGARITKETGKPFMIPGPMPGMPPKPQQPTKEIVSRSLVRPMKMLIFLPQVLILSFYTAFVFGLIYLLFTTFPAVFEGQYGFSPGVSGLSYIGIGFGMVGALFLFNFINMKMSNRTDKHGQLIPESYLPLMTWFSPLLPIGFFWYGWSADKQTHWVVPILGTFFVGFGSFAIIMPTTAYLVYAQGPQGAASVLAASNMMRYVFAAFLPLAGQNMYDQLGLGWGNSLLGFLCVVLAPVPAIFQRYGHYLRERFPTEF.

2 N-linked (GlcNAc...) asparagine glycosylation sites follow: Asn8 and Asn26. The next 4 membrane-spanning stretches (helical) occupy residues 63–83 (FLIH…ATTM), 103–123 (IALT…VTSP), 139–159 (IFFL…MFIA), and 162–182 (FLAG…IADF). Asn189 carries N-linked (GlcNAc...) asparagine glycosylation. 4 consecutive transmembrane segments (helical) span residues 195 to 215 (LFAL…GFVA), 222 to 242 (WTFR…CIFL), 298 to 318 (LIFL…FGLI), and 341 to 361 (GLSY…FNFI). N-linked (GlcNAc...) asparagine glycosylation is present at Asn367. The next 4 helical transmembrane spans lie at 380 to 400 (YLPL…WYGW), 408 to 428 (WVVP…IIMP), 442 to 462 (AASV…FLPL), and 474 to 494 (GWGN…PAIF).

It belongs to the major facilitator superfamily.

The protein localises to the cell membrane. Functionally, efflux pump that might be required for efficient secretion of fusaridione A or other secondary metabolies produced by the fusaridione A gene cluster. The polypeptide is MFS transporter fsdG (Fusarium heterosporum).